The sequence spans 292 residues: NAD kinase (292 aa).

Catalysis depends on Asp73, which acts as the Proton acceptor. NAD(+)-binding positions include 73–74, 147–148, His158, Arg175, Asp177, 188–193, and Gln247; these read DG, NE, and TAYSLS.

The protein belongs to the NAD kinase family. A divalent metal cation is required as a cofactor.

The protein resides in the cytoplasm. It carries out the reaction NAD(+) + ATP = ADP + NADP(+) + H(+). In terms of biological role, involved in the regulation of the intracellular balance of NAD and NADP, and is a key enzyme in the biosynthesis of NADP. Catalyzes specifically the phosphorylation on 2'-hydroxyl of the adenosine moiety of NAD to yield NADP. The polypeptide is NAD kinase (Klebsiella pneumoniae subsp. pneumoniae (strain ATCC 700721 / MGH 78578)).